The primary structure comprises 364 residues: tRNA/tmRNA (uracil-C(5))-methyltransferase (364 aa).

5 residues coordinate S-adenosyl-L-methionine: Gln-188, Tyr-216, Asn-221, Glu-237, and Asp-297. The active-site Nucleophile is the Cys-322. Glu-356 serves as the catalytic Proton acceptor.

This sequence belongs to the class I-like SAM-binding methyltransferase superfamily. RNA M5U methyltransferase family. TrmA subfamily.

It catalyses the reaction uridine(54) in tRNA + S-adenosyl-L-methionine = 5-methyluridine(54) in tRNA + S-adenosyl-L-homocysteine + H(+). The catalysed reaction is uridine(341) in tmRNA + S-adenosyl-L-methionine = 5-methyluridine(341) in tmRNA + S-adenosyl-L-homocysteine + H(+). In terms of biological role, dual-specificity methyltransferase that catalyzes the formation of 5-methyluridine at position 54 (m5U54) in all tRNAs, and that of position 341 (m5U341) in tmRNA (transfer-mRNA). The sequence is that of tRNA/tmRNA (uracil-C(5))-methyltransferase from Teredinibacter turnerae (strain ATCC 39867 / T7901).